Consider the following 237-residue polypeptide: Cysteine-rich venom protein DIS2 (237 aa).

An N-terminal signal peptide occupies residues 1–18 (MFVFILLSLAAVLQQSFG). Residues 37–165 (VDKHNAFRRS…SYNYFYVCQY (129 aa)) form the SCP domain. Cystine bridges form between Cys74/Cys152, Cys91/Cys166, Cys147/Cys163, Cys185/Cys192, Cys188/Cys197, Cys201/Cys234, and Cys219/Cys232. One can recognise a ShKT domain in the interval 201–234 (CSREDVFMNCKSLVAQSNCQDDYIRKNCPATCFC).

The protein belongs to the CRISP family. In terms of tissue distribution, expressed by the venom gland.

The protein localises to the secreted. Functionally, weakly blocks contraction of smooth muscle elicited by high potassium-induced depolarization, but does not block caffeine-stimulated contraction. May target voltage-gated calcium channels on smooth muscle. This is Cysteine-rich venom protein DIS2 from Dispholidus typus (Boomslang).